The chain runs to 461 residues: Porin AaxA (461 aa).

Positions 1-22 (MSFRSVLLTALLSLSFTTTMQA) are cleaved as a signal peptide.

Belongs to the OprB family.

Its subcellular location is the cell outer membrane. Facilitates L-arginine uptake, as part of the AaxABC system. The arginine uptake by the bacterium in the macrophage may be a virulence factor against the host innate immune response. This Chlamydia trachomatis serovar D (strain ATCC VR-885 / DSM 19411 / UW-3/Cx) protein is Porin AaxA (aaxA).